Consider the following 1129-residue polypeptide: Serine/threonine-protein kinase 11-interacting protein (1129 aa).

LRR repeat units follow at residues 107–128, 130–150, 162–183, 185–206, 208–229, 232–253, 254–275, and 279–300; these read SLRS…RSVY, QLEV…IALC, VLHT…LELL, SLKI…LKVL, ELQY…SVGN, KLHS…ENLP, NLQH…SGLA, and NLKQ…RALT. Disordered regions lie at residues 335 to 392, 428 to 475, 654 to 678, and 696 to 724; these read RLQP…RRGQ, DPEY…HVAP, GDIY…NHTG, and NPTG…GLAA. Residues 337 to 355 show a composition bias toward polar residues; the sequence is QPSSSATESSCTGDLTDSY. Residues 365 to 374 show a composition bias toward basic residues; that stretch reads LPRKKSRVKV. The segment covering 381 to 391 has biased composition (basic and acidic residues); that stretch reads ERSDSEYERRG. The span at 436–447 shows a compositional bias: pro residues; it reads HSPPPRASPSPT. Low complexity predominate over residues 448 to 458; the sequence is APSSVPKQKSP.

It belongs to the STK11IP family.

Its subcellular location is the cytoplasm. This is Serine/threonine-protein kinase 11-interacting protein (stk11ip) from Xenopus tropicalis (Western clawed frog).